A 266-amino-acid polypeptide reads, in one-letter code: Putative carbamate hydrolase RutD (266 aa).

It belongs to the AB hydrolase superfamily. Hydrolase RutD family.

The enzyme catalyses carbamate + 2 H(+) = NH4(+) + CO2. In terms of biological role, involved in pyrimidine catabolism. May facilitate the hydrolysis of carbamate, a reaction that can also occur spontaneously. The chain is Putative carbamate hydrolase RutD from Escherichia coli O26:H11 (strain 11368 / EHEC).